A 348-amino-acid chain; its full sequence is tRNA N6-adenosine threonylcarbamoyltransferase (348 aa).

Fe cation is bound by residues H115 and H119. Substrate-binding positions include 138–142 (LVSGG), D171, G184, and N278. Position 306 (D306) interacts with Fe cation.

It belongs to the KAE1 / TsaD family. It depends on Fe(2+) as a cofactor.

It localises to the cytoplasm. It carries out the reaction L-threonylcarbamoyladenylate + adenosine(37) in tRNA = N(6)-L-threonylcarbamoyladenosine(37) in tRNA + AMP + H(+). Its function is as follows. Required for the formation of a threonylcarbamoyl group on adenosine at position 37 (t(6)A37) in tRNAs that read codons beginning with adenine. Is involved in the transfer of the threonylcarbamoyl moiety of threonylcarbamoyl-AMP (TC-AMP) to the N6 group of A37, together with TsaE and TsaB. TsaD likely plays a direct catalytic role in this reaction. This Methylibium petroleiphilum (strain ATCC BAA-1232 / LMG 22953 / PM1) protein is tRNA N6-adenosine threonylcarbamoyltransferase.